A 107-amino-acid chain; its full sequence is Essential MCU regulator, mitochondrial (107 aa).

Residues 1–47 (MASGAARWLALVRVGSGASRSWLSLRKGGDVSAGRSCSGQSLVPTRS) constitute a mitochondrion transit peptide. Topologically, residues 48–65 (VIVTRSGAILPKPVKMSF) are mitochondrial matrix. The helical transmembrane segment at 66–85 (GLLRVFSIVIPFLYVGTLIS) threads the bilayer. The GXXXX[G/A/S] signature appears at 81 to 85 (GTLIS). At 86 to 107 (KNFAALLEEHDIFVPEDDDDDD) the chain is on the mitochondrial intermembrane side.

Belongs to the SMDT1/EMRE family. Component of the uniplex complex, composed of MCU, EMRE/SMDT1, MICU1 and MICU2 (or MICU3) in a 4:4:1:1 stoichiometry. The number of EMRE/SMDT1 molecules is hovewer variable, ranging from 1 to 4 copies per uniplex complex, leading to uniplex complexes with distinct gatekeeping profiles. Interacts (via its C-terminal poly-Asp tail) with MCUR1; the interaction is direct. Unprocessed form interacts (via transit peptide) with MAIP1. Undergoes proteolytic degradation in neurons: degraded by AFG3L2 and SPG7 before SMDT1/EMRE assembly with the uniporter complex, limiting the availability of SMDT1/EMRE for MCU assembly and promoting efficient assembly of gatekeeper subunits with MCU.

The protein resides in the mitochondrion inner membrane. In terms of biological role, essential regulatory subunit of the mitochondrial calcium uniporter complex (uniplex), a complex that mediates calcium uptake into mitochondria. Required to bridge the calcium-sensing proteins MICU1 with the calcium-conducting subunit MCU. Acts by mediating activation of MCU and retention of MICU1 to the MCU pore, in order to ensure tight regulation of the uniplex complex and appropriate responses to intracellular calcium signaling. This is Essential MCU regulator, mitochondrial from Bos taurus (Bovine).